The primary structure comprises 652 residues: Na(+)/H(+) antiporter NhaA 1 (652 aa).

Positions 1 to 427 are na(+)/H(+) antiporter NhaA; sequence MTGELPRGRR…VGASLTTWLV (427 aa). 11 helical membrane-spanning segments follow: residues 27 to 47, 78 to 98, 114 to 134, 142 to 162, 173 to 193, 200 to 220, 227 to 247, 312 to 332, 343 to 363, 376 to 396, and 411 to 431; these read AFLH…VVAL, LRYW…GLEV, TLPL…YLAF, VGWG…LAVL, FLLT…AIAY, TALF…AAGG, LLLG…PVVV, LIVP…ELLA, VLFA…MLVA, WAAI…ALLI, and IGIL…FRLA. The Thioredoxin domain maps to 428–623; the sequence is FRLAARLPPA…LSAAVTSAFA (196 aa). The interval 626-652 is disordered; that stretch reads RLRPRDDREPDRRREVGSEQPDEEPGT. The span at 628–642 shows a compositional bias: basic and acidic residues; that stretch reads RPRDDREPDRRREVG.

The protein in the N-terminal section; belongs to the NhaA Na(+)/H(+) (TC 2.A.33) antiporter family.

The protein resides in the cell membrane. It catalyses the reaction Na(+)(in) + 2 H(+)(out) = Na(+)(out) + 2 H(+)(in). In terms of biological role, na(+)/H(+) antiporter that extrudes sodium in exchange for external protons. The chain is Na(+)/H(+) antiporter NhaA 1 from Salinispora arenicola (strain CNS-205).